Consider the following 420-residue polypeptide: Transcription termination factor Rho (420 aa).

The 76-residue stretch at D49–K124 folds into the Rho RNA-BD domain. ATP is bound by residues G170–G175, K182–M187, and R213.

Belongs to the Rho family. Homohexamer. The homohexamer assembles into an open ring structure.

Functionally, facilitates transcription termination by a mechanism that involves Rho binding to the nascent RNA, activation of Rho's RNA-dependent ATPase activity, and release of the mRNA from the DNA template. This is Transcription termination factor Rho from Haemophilus influenzae (strain ATCC 51907 / DSM 11121 / KW20 / Rd).